Reading from the N-terminus, the 489-residue chain is Retinoblastoma-binding protein 5 homolog (489 aa).

6 WD repeats span residues 22–63 (DCIS…KIIS), 64–103 (AHVH…LEHK), 147–187 (DSDG…VVAS), 195–234 (SSAT…TLGK), 248–290 (VNKT…KILH), and 292–330 (TKGE…NWSA). The disordered stretch occupies residues 451–489 (DVSLPDAPTDETHPLISSKASKDKQQPVGGKKAAGRTKK).

In terms of assembly, core component of several methyltransferase-containing complexes. Component of the SET1 complex, composed at least of the catalytic subunit Set1, wds/WDR5, Wdr82, Rbbp5, ash2, Cfp1/CXXC1, hcf and Dpy-30L1. Component of the MLL3/4 complex composed at least of the catalytic subunit trr, ash2, Rbbp5, Dpy-30L1, wds, hcf, ptip, Pa1, Utx, Lpt and Ncoa6.

It localises to the nucleus. Its function is as follows. Component of the SET1 complex that specifically di- and trimethylates 'Lys-4' of histone H3 and of the MLL3/4 complex which also methylates histone H3 'Lys-4'. The sequence is that of Retinoblastoma-binding protein 5 homolog from Drosophila melanogaster (Fruit fly).